The chain runs to 64 residues: Large ribosomal subunit protein bL35 (64 aa).

It belongs to the bacterial ribosomal protein bL35 family.

The protein is Large ribosomal subunit protein bL35 of Levilactobacillus brevis (strain ATCC 367 / BCRC 12310 / CIP 105137 / JCM 1170 / LMG 11437 / NCIMB 947 / NCTC 947) (Lactobacillus brevis).